We begin with the raw amino-acid sequence, 153 residues long: 17.6 kDa class I heat shock protein (153 aa).

Positions 38-153 (ETAAIVNARI…PMVKAIDISG (116 aa)) constitute a sHSP domain.

The protein belongs to the small heat shock protein (HSP20) family. As to quaternary structure, forms oligomeric structures.

Its subcellular location is the cytoplasm. The polypeptide is 17.6 kDa class I heat shock protein (HSP17.6) (Helianthus annuus (Common sunflower)).